We begin with the raw amino-acid sequence, 393 residues long: NAD(P)H-quinone oxidoreductase subunit H, chloroplastic (393 aa).

Belongs to the complex I 49 kDa subunit family. NDH is composed of at least 16 different subunits, 5 of which are encoded in the nucleus.

Its subcellular location is the plastid. It localises to the chloroplast thylakoid membrane. It carries out the reaction a plastoquinone + NADH + (n+1) H(+)(in) = a plastoquinol + NAD(+) + n H(+)(out). The catalysed reaction is a plastoquinone + NADPH + (n+1) H(+)(in) = a plastoquinol + NADP(+) + n H(+)(out). Its function is as follows. NDH shuttles electrons from NAD(P)H:plastoquinone, via FMN and iron-sulfur (Fe-S) centers, to quinones in the photosynthetic chain and possibly in a chloroplast respiratory chain. The immediate electron acceptor for the enzyme in this species is believed to be plastoquinone. Couples the redox reaction to proton translocation, and thus conserves the redox energy in a proton gradient. This is NAD(P)H-quinone oxidoreductase subunit H, chloroplastic from Arabis hirsuta (Hairy rock-cress).